The primary structure comprises 473 residues: MAKFVLAGRADCPYYAKAELLADYLQKNLPDFRIHKITQHPDIWEEWLKDLCKKNRWSHNKSPIIWRELLDRGGKGLLLGGYNEFLEHAQLYYGVTSSMTTELMKRVAQENLGTHIEKELEKESLKGLVNPLQVWITSASSLACYHLIPILTSGEVFGPQMEISINLFDNKHTEEKLISHKQEAEDLASPCLQSVSICTQAEEAFHGAHVIIILDDHVDKEINSLEDCIRSRAPLCQLYGSLIEKNAHNFAKIIVGGKTFVNLKTALLMKYAPTFAHNIIAVALGVEGQAKAALARKLKITPSCIKDVIIWGNISGNNYVDLRKAKVYRYESAIWGPPHYSRPVLSLLFDREWVNREFVVSLKTLTATGRQFGGMLAAHSIATTLKYWCHGSPPGEIVSLGVLSEGQFGIPKGIVFSMPVKFENGTWVVLTDLKNTEISQQVMTRMANDLIQEQLVALGELANFQPYQSENLI.

This sequence belongs to the LDH/MDH superfamily. MDH type 2 family.

The protein is Putative malate dehydrogenase 1B (MDH1B) of Bos taurus (Bovine).